Here is a 449-residue protein sequence, read N- to C-terminus: UDP-N-acetylmuramoylalanine--D-glutamate ligase (449 aa).

118 to 124 serves as a coordination point for ATP; sequence GTNGKTT.

It belongs to the MurCDEF family.

The protein resides in the cytoplasm. It carries out the reaction UDP-N-acetyl-alpha-D-muramoyl-L-alanine + D-glutamate + ATP = UDP-N-acetyl-alpha-D-muramoyl-L-alanyl-D-glutamate + ADP + phosphate + H(+). It functions in the pathway cell wall biogenesis; peptidoglycan biosynthesis. Functionally, cell wall formation. Catalyzes the addition of glutamate to the nucleotide precursor UDP-N-acetylmuramoyl-L-alanine (UMA). The protein is UDP-N-acetylmuramoylalanine--D-glutamate ligase of Staphylococcus epidermidis (strain ATCC 35984 / DSM 28319 / BCRC 17069 / CCUG 31568 / BM 3577 / RP62A).